The following is a 212-amino-acid chain: ER lumen protein-retaining receptor 1-B (212 aa).

Residues 1–4 (MNIF) are Lumenal-facing. Residues 5-24 (RFLGDISHLSAIIILLLKIW) form a helical membrane-spanning segment. The Cytoplasmic segment spans residues 25–32 (KSRSCAGI). The chain crosses the membrane as a helical span at residues 33-52 (SGKSQLLFAIVFTTRYLDLF). The tract at residues 47–48 (RY) is interaction with the K-D-E-L motif on target proteins. The Lumenal portion of the chain corresponds to 53–58 (TNFISF). Residues 59–79 (YNTSMKVVYVASSYATVWMIY) traverse the membrane as a helical segment. Residues 80 to 92 (SKFKATYDGNHDT) lie on the Cytoplasmic side of the membrane. A helical transmembrane segment spans residues 93–110 (FRVEFLIVPTAILSFLVN). Over 111 to 116 (HDFTPL) the chain is Lumenal. Residues 117 to 135 (EILWTFSIYLESVAILPQL) form a helical membrane-spanning segment. Residues 136 to 149 (FMVSKTGEAETITS) are Cytoplasmic-facing. Residues 150 to 168 (HYLFALGIYRTLYLFNWIW) traverse the membrane as a helical segment. The tract at residues 159–169 (RTLYLFNWIWR) is interaction with the K-D-E-L motif on target proteins. Over 169 to 178 (RYQFEEFFDL) the chain is Lumenal. Residues 179–199 (IAIVAGLVQTVLYCDFFYLYI) traverse the membrane as a helical segment. At 200-212 (TKVLKGKKLSLPA) the chain is on the cytoplasmic side. Residues 204–207 (KGKK) are important for recycling of cargo proteins with the sequence motif K-D-E-L from the Golgi to the endoplasmic reticulum.

This sequence belongs to the ERD2 family.

Its subcellular location is the golgi apparatus membrane. The protein resides in the cytoplasmic vesicle. The protein localises to the COPI-coated vesicle membrane. It is found in the endoplasmic reticulum membrane. It localises to the endoplasmic reticulum-Golgi intermediate compartment membrane. Functionally, receptor for the C-terminal sequence motif K-D-E-L that is present on endoplasmic reticulum resident proteins and that mediates their recycling from the Golgi back to the endoplasmic reticulum. This chain is ER lumen protein-retaining receptor 1-B (kdelr1-b), found in Xenopus laevis (African clawed frog).